Consider the following 223-residue polypeptide: Endonuclease V (223 aa).

Mg(2+) contacts are provided by Asp35 and Asp103.

It belongs to the endonuclease V family. Mg(2+) is required as a cofactor.

The protein localises to the cytoplasm. It catalyses the reaction Endonucleolytic cleavage at apurinic or apyrimidinic sites to products with a 5'-phosphate.. Functionally, DNA repair enzyme involved in the repair of deaminated bases. Selectively cleaves double-stranded DNA at the second phosphodiester bond 3' to a deoxyinosine leaving behind the intact lesion on the nicked DNA. The polypeptide is Endonuclease V (Cronobacter sakazakii (strain ATCC BAA-894) (Enterobacter sakazakii)).